The primary structure comprises 860 residues: LPS-assembly protein LptD (860 aa).

A signal peptide spans 1–21 (MTKRYFSLLAVCSAIATSTFA).

Belongs to the LptD family. In terms of assembly, component of the lipopolysaccharide transport and assembly complex. Interacts with LptE and LptA.

The protein resides in the cell outer membrane. Together with LptE, is involved in the assembly of lipopolysaccharide (LPS) at the surface of the outer membrane. This chain is LPS-assembly protein LptD, found in Saccharophagus degradans (strain 2-40 / ATCC 43961 / DSM 17024).